The chain runs to 283 residues: Thymidylate synthase (283 aa).

Arginine 22 serves as a coordination point for dUMP. Catalysis depends on cysteine 160, which acts as the Nucleophile. Residues arginine 180–aspartate 183, asparagine 191, and histidine 221–tyrosine 223 contribute to the dUMP site. A (6R)-5,10-methylene-5,6,7,8-tetrahydrofolate-binding site is contributed by aspartate 183. Serine 282 serves as a coordination point for (6R)-5,10-methylene-5,6,7,8-tetrahydrofolate.

Belongs to the thymidylate synthase family. Bacterial-type ThyA subfamily. As to quaternary structure, homodimer.

The protein resides in the cytoplasm. The enzyme catalyses dUMP + (6R)-5,10-methylene-5,6,7,8-tetrahydrofolate = 7,8-dihydrofolate + dTMP. The protein operates within pyrimidine metabolism; dTTP biosynthesis. In terms of biological role, catalyzes the reductive methylation of 2'-deoxyuridine-5'-monophosphate (dUMP) to 2'-deoxythymidine-5'-monophosphate (dTMP) while utilizing 5,10-methylenetetrahydrofolate (mTHF) as the methyl donor and reductant in the reaction, yielding dihydrofolate (DHF) as a by-product. This enzymatic reaction provides an intracellular de novo source of dTMP, an essential precursor for DNA biosynthesis. This chain is Thymidylate synthase, found in Vibrio vulnificus (strain CMCP6).